Reading from the N-terminus, the 159-residue chain is Ribosomal RNA large subunit methyltransferase H (159 aa).

S-adenosyl-L-methionine contacts are provided by residues isoleucine 75, glycine 108, and 127-132; that span reads FGRMTL.

It belongs to the RNA methyltransferase RlmH family. As to quaternary structure, homodimer.

Its subcellular location is the cytoplasm. The enzyme catalyses pseudouridine(1915) in 23S rRNA + S-adenosyl-L-methionine = N(3)-methylpseudouridine(1915) in 23S rRNA + S-adenosyl-L-homocysteine + H(+). Its function is as follows. Specifically methylates the pseudouridine at position 1915 (m3Psi1915) in 23S rRNA. The polypeptide is Ribosomal RNA large subunit methyltransferase H (Lactococcus lactis subsp. lactis (strain IL1403) (Streptococcus lactis)).